The sequence spans 305 residues: Phosphatidylinositol:ceramide inositolphosphotransferase 2 (305 aa).

The next 6 membrane-spanning stretches (helical) occupy residues 34–54 (LLAGLICQYIHGLAAKGVHYI), 81–101 (ETVFTSVFLSFFLWTFHPFIL), 105–125 (KIYTVLIWCRVLAFLVACQFL), 168–188 (VMYGCGDLIFSSHMIFTLVFV), 198–218 (RFIKLFGWLTAIVQSLLIIAS), and 221–241 (HYSVDVVVAWYTVNLVVFCLD). The active site involves His-180. Residues His-221 and Asp-225 contribute to the active site.

This sequence belongs to the sphingomyelin synthase family. Expressed in leaves, roots, stems, flowers and siliques.

It localises to the golgi apparatus. The protein localises to the trans-Golgi network membrane. The enzyme catalyses an N-(2R-hydroxy-very-long-chain fatty acyl)-(R)-4-hydroxysphingoid base + a 1,2-diacyl-sn-glycero-3-phospho-(1D-myo-inositol) = a 1D-myo-inositol-1-phospho-N-[(R)-2-hydroxy-very-long-chain fatty acyl]-(R)-4-hydroxysphingoid base + a 1,2-diacyl-sn-glycerol. It functions in the pathway sphingolipid metabolism. Functionally, catalyzes the transfer of the phosphorylinositol group from phosphatidylinositol (PI) to phytoceramide, an essential step in sphingolipid biosynthesis. May play an important role in modulating plant programmed cell death (PCD) associated with defense (e.g. toward Golovinomyces cichoracearum) by promoting sphingolipid metabolism and thus regulating ceramide accumulation. The protein is Phosphatidylinositol:ceramide inositolphosphotransferase 2 of Arabidopsis thaliana (Mouse-ear cress).